A 209-amino-acid chain; its full sequence is Protein GrpE (209 aa).

A disordered region spans residues 1 to 63 (MKKSRKKENM…NPEEACREEN (63 aa)). Composition is skewed to basic and acidic residues over residues 7 to 42 (KENMDSKERNQKEAERSEARNSESPAEKAGETKVSP) and 50 to 63 (EAEKNPEEACREEN).

It belongs to the GrpE family. In terms of assembly, homodimer.

It is found in the cytoplasm. Participates actively in the response to hyperosmotic and heat shock by preventing the aggregation of stress-denatured proteins, in association with DnaK and GrpE. It is the nucleotide exchange factor for DnaK and may function as a thermosensor. Unfolded proteins bind initially to DnaJ; upon interaction with the DnaJ-bound protein, DnaK hydrolyzes its bound ATP, resulting in the formation of a stable complex. GrpE releases ADP from DnaK; ATP binding to DnaK triggers the release of the substrate protein, thus completing the reaction cycle. Several rounds of ATP-dependent interactions between DnaJ, DnaK and GrpE are required for fully efficient folding. The protein is Protein GrpE of Methanosarcina mazei (strain ATCC BAA-159 / DSM 3647 / Goe1 / Go1 / JCM 11833 / OCM 88) (Methanosarcina frisia).